The following is a 930-amino-acid chain: Bifunctional uridylyltransferase/uridylyl-removing enzyme (930 aa).

The segment at 1–387 (MAPASEAGPA…IMGLFRRKKR (387 aa)) is uridylyltransferase. A uridylyl-removing region spans residues 388–741 (LKPEYSLVNG…LDPDPDRDAT (354 aa)). Residues 504–626 (VDEHTIQCIS…VRSKKRLDLL (123 aa)) enclose the HD domain. ACT domains are found at residues 742–818 (RACF…VVAR) and 852–927 (IIEV…GAER).

It belongs to the GlnD family. Mg(2+) is required as a cofactor.

It catalyses the reaction [protein-PII]-L-tyrosine + UTP = [protein-PII]-uridylyl-L-tyrosine + diphosphate. The catalysed reaction is [protein-PII]-uridylyl-L-tyrosine + H2O = [protein-PII]-L-tyrosine + UMP + H(+). With respect to regulation, uridylyltransferase (UTase) activity is inhibited by glutamine, while glutamine activates uridylyl-removing (UR) activity. In terms of biological role, modifies, by uridylylation and deuridylylation, the PII regulatory proteins (GlnB and homologs), in response to the nitrogen status of the cell that GlnD senses through the glutamine level. Under low glutamine levels, catalyzes the conversion of the PII proteins and UTP to PII-UMP and PPi, while under higher glutamine levels, GlnD hydrolyzes PII-UMP to PII and UMP (deuridylylation). Thus, controls uridylylation state and activity of the PII proteins, and plays an important role in the regulation of nitrogen fixation and metabolism. The chain is Bifunctional uridylyltransferase/uridylyl-removing enzyme from Cereibacter sphaeroides (strain ATCC 17023 / DSM 158 / JCM 6121 / CCUG 31486 / LMG 2827 / NBRC 12203 / NCIMB 8253 / ATH 2.4.1.) (Rhodobacter sphaeroides).